The chain runs to 764 residues: Phosphoribosylformylglycinamidine synthase subunit PurL (764 aa).

Residues 1-23 (MTQEVDTVERAAATPDHPQPYRE) are disordered. His57 is an active-site residue. 2 residues coordinate ATP: Tyr60 and Lys104. Glu106 is a binding site for Mg(2+). Substrate contacts are provided by residues 107-110 (SHNH) and Arg129. His108 acts as the Proton acceptor in catalysis. Position 130 (Asp130) interacts with Mg(2+). Residue Gln258 coordinates substrate. Asp286 lines the Mg(2+) pocket. 330-332 (ESQ) contributes to the substrate binding site. 2 residues coordinate ATP: Asn518 and Gly555. Position 556 (Asn556) interacts with Mg(2+). A substrate-binding site is contributed by Ser558.

This sequence belongs to the FGAMS family. Monomer. Part of the FGAM synthase complex composed of 1 PurL, 1 PurQ and 2 PurS subunits.

It localises to the cytoplasm. The enzyme catalyses N(2)-formyl-N(1)-(5-phospho-beta-D-ribosyl)glycinamide + L-glutamine + ATP + H2O = 2-formamido-N(1)-(5-O-phospho-beta-D-ribosyl)acetamidine + L-glutamate + ADP + phosphate + H(+). It participates in purine metabolism; IMP biosynthesis via de novo pathway; 5-amino-1-(5-phospho-D-ribosyl)imidazole from N(2)-formyl-N(1)-(5-phospho-D-ribosyl)glycinamide: step 1/2. Its function is as follows. Part of the phosphoribosylformylglycinamidine synthase complex involved in the purines biosynthetic pathway. Catalyzes the ATP-dependent conversion of formylglycinamide ribonucleotide (FGAR) and glutamine to yield formylglycinamidine ribonucleotide (FGAM) and glutamate. The FGAM synthase complex is composed of three subunits. PurQ produces an ammonia molecule by converting glutamine to glutamate. PurL transfers the ammonia molecule to FGAR to form FGAM in an ATP-dependent manner. PurS interacts with PurQ and PurL and is thought to assist in the transfer of the ammonia molecule from PurQ to PurL. The chain is Phosphoribosylformylglycinamidine synthase subunit PurL from Mycolicibacterium vanbaalenii (strain DSM 7251 / JCM 13017 / BCRC 16820 / KCTC 9966 / NRRL B-24157 / PYR-1) (Mycobacterium vanbaalenii).